Consider the following 160-residue polypeptide: Cyanate hydratase (160 aa).

Residues R100, E103, and S126 contribute to the active site.

It belongs to the cyanase family.

It catalyses the reaction cyanate + hydrogencarbonate + 3 H(+) = NH4(+) + 2 CO2. In terms of biological role, catalyzes the reaction of cyanate with bicarbonate to produce ammonia and carbon dioxide. The chain is Cyanate hydratase from Neosartorya fischeri (strain ATCC 1020 / DSM 3700 / CBS 544.65 / FGSC A1164 / JCM 1740 / NRRL 181 / WB 181) (Aspergillus fischerianus).